The following is a 196-amino-acid chain: Peroxiredoxin TSA1 (196 aa).

The region spanning 3 to 161 (AQVQKQAPTF…ALRLVEAFQW (159 aa)) is the Thioredoxin domain. A Glycyl lysine isopeptide (Lys-Gly) (interchain with G-Cter in ubiquitin) cross-link involves residue lysine 14. Substrate is bound at residue 45–47 (TFV). Cysteine 48 functions as the Cysteine sulfenic acid (-SOH) intermediate in the catalytic mechanism. A Glycyl lysine isopeptide (Lys-Gly) (interchain with G-Cter in ubiquitin) cross-link involves residue lysine 89. Arginine 124 lines the substrate pocket. A Glycyl lysine isopeptide (Lys-Gly) (interchain with G-Cter in ubiquitin) cross-link involves residue lysine 132. Threonine 174 carries the phosphothreonine modification.

The protein belongs to the peroxiredoxin family. AhpC/Prx1 subfamily. In terms of assembly, homodimer; disulfide-linked, upon oxidation. Interacts with YAP1 via transient disulfide linkages. Post-translationally, the enzyme can be inactivated by further oxidation of the cysteine sulfenic acid (C(P)-SOH) to sulphinic acid (C(P)-SO2H) instead of its condensation to a disulfide bond. It can be reactivated by forming a transient disulfide bond with sulfiredoxin SRX1, which reduces the cysteine sulfinic acid in an ATP- and Mg-dependent manner.

The protein resides in the cytoplasm. It catalyses the reaction a hydroperoxide + [thioredoxin]-dithiol = an alcohol + [thioredoxin]-disulfide + H2O. In terms of biological role, thiol-specific peroxidase that catalyzes the reduction of hydrogen peroxide and organic hydroperoxides to water and alcohols, respectively. Plays a role in cell protection against oxidative stress by detoxifying peroxides and as sensor of hydrogen peroxide-mediated signaling events. Protects the cell against the oxidative stress caused by nascent-protein misfolding and aggregation. Relays hydrogen peroxide as a signal to the transcription factor YAP1 by inducing the formation of intramolecular disulfide bonds in YAP1, which causes its nuclear accumulation and activation. Can act alternatively as peroxidase and molecular chaperone. Oxidative stress and heat shock exposure cause a reversible shift of the protein structure from low MW species to high MW complexes, triggering a peroxidase-to-chaperone functional switch. The chaperone function of the protein enhances resistance to heat shock. This Saccharomyces cerevisiae (strain ATCC 204508 / S288c) (Baker's yeast) protein is Peroxiredoxin TSA1.